Reading from the N-terminus, the 1014-residue chain is UvrABC system protein A (1014 aa).

Position 32–39 (32–39) interacts with ATP; it reads GLSGSGKS. ABC transporter domains lie at 314–592 and 612–941; these read WSHG…AESQ and QDPS…KFLR. 645–652 is a binding site for ATP; that stretch reads GVSGSGKS. The segment at 744–770 adopts a C4-type zinc-finger fold; it reads CENCAGDGTIKIEMNFLPDVYVPCEVC. Residues 976 to 995 show a composition bias toward low complexity; the sequence is TKTVTGTAAKKATATRTAKT. Positions 976 to 1014 are disordered; sequence TKTVTGTAAKKATATRTAKTAVKKAAKPAAKKTTRTSKA. Over residues 996–1014 the composition is skewed to basic residues; it reads AVKKAAKPAAKKTTRTSKA.

This sequence belongs to the ABC transporter superfamily. UvrA family. As to quaternary structure, forms a heterotetramer with UvrB during the search for lesions.

It localises to the cytoplasm. The UvrABC repair system catalyzes the recognition and processing of DNA lesions. UvrA is an ATPase and a DNA-binding protein. A damage recognition complex composed of 2 UvrA and 2 UvrB subunits scans DNA for abnormalities. When the presence of a lesion has been verified by UvrB, the UvrA molecules dissociate. This Streptomyces coelicolor (strain ATCC BAA-471 / A3(2) / M145) protein is UvrABC system protein A.